The following is an 89-amino-acid chain: uncharacterized protein (89 aa).

The chain crosses the membrane as a helical span at residues 28-50 (LYLDLGFSALLFYNSNLLFSFIL).

It localises to the membrane. This is an uncharacterized protein from Archaeoglobus fulgidus (strain ATCC 49558 / DSM 4304 / JCM 9628 / NBRC 100126 / VC-16).